The chain runs to 283 residues: GTP cyclohydrolase MptA (283 aa).

The protein belongs to the GTP cyclohydrolase IV family. Homodimer. Fe(2+) serves as cofactor.

The enzyme catalyses GTP + H2O = 7,8-dihydroneopterin 2',3'-cyclic phosphate + formate + diphosphate + H(+). It functions in the pathway cofactor biosynthesis; 5,6,7,8-tetrahydromethanopterin biosynthesis. In terms of biological role, converts GTP to 7,8-dihydro-D-neopterin 2',3'-cyclic phosphate, the first intermediate in the biosynthesis of coenzyme methanopterin. In Aeropyrum pernix (strain ATCC 700893 / DSM 11879 / JCM 9820 / NBRC 100138 / K1), this protein is GTP cyclohydrolase MptA.